The chain runs to 580 residues: mRNA cap guanine-N(7) methyltransferase (580 aa).

Composition is skewed to polar residues over residues 1-17 and 25-53; these read MSGS…TSLI and EATS…NSDL. Positions 1–222 are disordered; the sequence is MSGSKQGSEK…PVEAQPYSRL (222 aa). The span at 54 to 67 shows a compositional bias: basic and acidic residues; that stretch reads KVTENKPKNTEMKP. Residues 69-90 are compositionally biased toward polar residues; that stretch reads DPNTNASTTENTPITTSNAQVS. Positions 102 to 154 are enriched in basic and acidic residues; that stretch reads REPEEAQNRYDRYVPRVDNRRRGEPRVAEVRQDPRYAKYLRQDQEERRIRRPD. Residues 191-214 show a composition bias toward acidic residues; that stretch reads ESEENGDEQQGDDEEETPGNEEPV. In terms of domain architecture, mRNA cap 0 methyltransferase spans 271-579; the sequence is SPIYKLRNFN…FYLGFAFEKL (309 aa). 280–281 is an mRNA binding site; that stretch reads NN. Lys-284, Cys-308, Asp-330, Asp-376, Gln-406, and Tyr-411 together coordinate S-adenosyl-L-methionine.

This sequence belongs to the class I-like SAM-binding methyltransferase superfamily. mRNA cap 0 methyltransferase family.

It localises to the nucleus. It catalyses the reaction a 5'-end (5'-triphosphoguanosine)-ribonucleoside in mRNA + S-adenosyl-L-methionine = a 5'-end (N(7)-methyl 5'-triphosphoguanosine)-ribonucleoside in mRNA + S-adenosyl-L-homocysteine. Responsible for methylating the 5'-cap structure of mRNAs. This is mRNA cap guanine-N(7) methyltransferase (ABD1) from Meyerozyma guilliermondii (strain ATCC 6260 / CBS 566 / DSM 6381 / JCM 1539 / NBRC 10279 / NRRL Y-324) (Yeast).